A 207-amino-acid polypeptide reads, in one-letter code: Imidazole glycerol phosphate synthase subunit HisH (207 aa).

Residues 1–207 (MIAIVDYNMG…ENFTKYRNLK (207 aa)) form the Glutamine amidotransferase type-1 domain. The active-site Nucleophile is cysteine 79. Residues histidine 185 and glutamate 187 contribute to the active site.

In terms of assembly, heterodimer of HisH and HisF.

The protein localises to the cytoplasm. The enzyme catalyses 5-[(5-phospho-1-deoxy-D-ribulos-1-ylimino)methylamino]-1-(5-phospho-beta-D-ribosyl)imidazole-4-carboxamide + L-glutamine = D-erythro-1-(imidazol-4-yl)glycerol 3-phosphate + 5-amino-1-(5-phospho-beta-D-ribosyl)imidazole-4-carboxamide + L-glutamate + H(+). The catalysed reaction is L-glutamine + H2O = L-glutamate + NH4(+). It functions in the pathway amino-acid biosynthesis; L-histidine biosynthesis; L-histidine from 5-phospho-alpha-D-ribose 1-diphosphate: step 5/9. Functionally, IGPS catalyzes the conversion of PRFAR and glutamine to IGP, AICAR and glutamate. The HisH subunit catalyzes the hydrolysis of glutamine to glutamate and ammonia as part of the synthesis of IGP and AICAR. The resulting ammonia molecule is channeled to the active site of HisF. The chain is Imidazole glycerol phosphate synthase subunit HisH from Sulfurimonas denitrificans (strain ATCC 33889 / DSM 1251) (Thiomicrospira denitrificans (strain ATCC 33889 / DSM 1251)).